The primary structure comprises 217 residues: UPF0502 protein ESA_02280 (217 aa).

The protein belongs to the UPF0502 family.

In Cronobacter sakazakii (strain ATCC BAA-894) (Enterobacter sakazakii), this protein is UPF0502 protein ESA_02280.